The chain runs to 341 residues: MAKEIILTGDRPTGKLHIGHYVGSLKNRVQLQNSGDYRSFIMIADQQALTDNARNPEKIRNSLIEVALDYLAVGIDPLKSTILVQSQIPELNELTMHYLNLVTLSRLERNPTVKAEIKQKNFENSIPAGFLIYPVSQAADITAFKATTVPVGEDQLPMIEQAREIVRSFNTIYGKEVLVEPKAVIPKGTIGRLPGTDGKAKMSKSIGNAIYLADEADVIKQKVMSMYTDPNHIKVTDPGQVEGNTVFTYLDTFCKDTETLEEMKAHYSRGGLGDVKVKKFLNEILQAELEPIRNRRKEFQKDIPEVYRILKEGSEKAREVAAGTLKEVRETIGIEYFNNIF.

ATP-binding positions include 11 to 13 (RPT) and 19 to 20 (GH). The 'HIGH' region motif lies at 12 to 20 (PTGKLHIGH). L-tryptophan is bound at residue Asp140. ATP is bound by residues 152–154 (GED), Leu193, and 201–205 (KMSKS). Residues 201–205 (KMSKS) carry the 'KMSKS' region motif.

Belongs to the class-I aminoacyl-tRNA synthetase family. As to quaternary structure, homodimer.

The protein resides in the cytoplasm. It carries out the reaction tRNA(Trp) + L-tryptophan + ATP = L-tryptophyl-tRNA(Trp) + AMP + diphosphate + H(+). Its function is as follows. Catalyzes the attachment of tryptophan to tRNA(Trp). The sequence is that of Tryptophan--tRNA ligase from Clostridium longisporum.